The sequence spans 375 residues: Secondary metabolism regulator laeA (375 aa).

Over residues 15–26 (ASPNRNNYSYQG) the composition is skewed to polar residues. Disordered stretches follow at residues 15-37 (ASPNRNNYSYQGIESYDSGRSRQ) and 50-75 (QEPPREPPDNNDPYDGHGGPAGTSHY).

This sequence belongs to the methyltransferase superfamily. LaeA methyltransferase family. As to quaternary structure, component of the heterotrimeric velvet complex composed of laeA, veA and velB; VeA acting as a bridging protein between laeA and velB.

It is found in the nucleus. The catalysed reaction is L-methionyl-[protein] + S-adenosyl-L-methionine = S-methyl-L-methionyl-[protein] + S-adenosyl-L-homocysteine. Methyltransferase that performs automethylation. No other methyl-accepting substrate has been identified yet. Component of the velvet transcription factor complex that acts as a global regulator for secondary metabolite gene expression. Controls the expression of the citric acid, demethylkotanin, orlandin, asperrubrol, tensidol B, atromentin and JBIR8 gene clusters. Also represses the expression of genes related to the production of BMS-192548 and aspernigrin A. The protein is Secondary metabolism regulator laeA of Aspergillus niger (strain ATCC 1015 / CBS 113.46 / FGSC A1144 / LSHB Ac4 / NCTC 3858a / NRRL 328 / USDA 3528.7).